A 158-amino-acid chain; its full sequence is Succinate dehydrogenase assembly factor 2, mitochondrial (158 aa).

The N-terminal 17 residues, 1–17, are a transit peptide targeting the mitochondrion; it reads MFSANIARKVVCSVCRA.

The protein belongs to the SDHAF2 family. In terms of assembly, interacts with sdha within the SDH catalytic dimer.

The protein localises to the mitochondrion matrix. Its function is as follows. Plays an essential role in the assembly of succinate dehydrogenase (SDH), an enzyme complex (also referred to as respiratory complex II) that is a component of both the tricarboxylic acid (TCA) cycle and the mitochondrial electron transport chain, and which couples the oxidation of succinate to fumarate with the reduction of ubiquinone (coenzyme Q) to ubiquinol. Required for flavinylation (covalent attachment of FAD) of the flavoprotein subunit sdha of the SDH catalytic dimer. The protein is Succinate dehydrogenase assembly factor 2, mitochondrial of Danio rerio (Zebrafish).